A 342-amino-acid chain; its full sequence is Holliday junction branch migration complex subunit RuvB (342 aa).

A large ATPase domain (RuvB-L) region spans residues 1–179 (MTNILSPEKS…FGIPMRLNFY (179 aa)). ATP-binding positions include Ile18, Arg19, Gly60, Lys63, Thr64, Thr65, 126–128 (EDF), Arg169, Tyr179, and Arg216. Position 64 (Thr64) interacts with Mg(2+). Residues 180 to 250 (NTEELKQVLN…ICDFGLKRLT (71 aa)) form a small ATPAse domain (RuvB-S) region. The segment at 253-342 (SIGLDSNDYR…NQLNILNENE (90 aa)) is head domain (RuvB-H). DNA is bound by residues Arg289, Arg308, and Arg313.

The protein belongs to the RuvB family. Homohexamer. Forms an RuvA(8)-RuvB(12)-Holliday junction (HJ) complex. HJ DNA is sandwiched between 2 RuvA tetramers; dsDNA enters through RuvA and exits via RuvB. An RuvB hexamer assembles on each DNA strand where it exits the tetramer. Each RuvB hexamer is contacted by two RuvA subunits (via domain III) on 2 adjacent RuvB subunits; this complex drives branch migration. In the full resolvosome a probable DNA-RuvA(4)-RuvB(12)-RuvC(2) complex forms which resolves the HJ.

It localises to the cytoplasm. It carries out the reaction ATP + H2O = ADP + phosphate + H(+). Functionally, participates in UV-tolerance of Synechocystis PCC 6803. Its function is as follows. The RuvA-RuvB-RuvC complex processes Holliday junction (HJ) DNA during genetic recombination and DNA repair, while the RuvA-RuvB complex plays an important role in the rescue of blocked DNA replication forks via replication fork reversal (RFR). RuvA specifically binds to HJ cruciform DNA, conferring on it an open structure. The RuvB hexamer acts as an ATP-dependent pump, pulling dsDNA into and through the RuvAB complex. RuvB forms 2 homohexamers on either side of HJ DNA bound by 1 or 2 RuvA tetramers; 4 subunits per hexamer contact DNA at a time. Coordinated motions by a converter formed by DNA-disengaged RuvB subunits stimulates ATP hydrolysis and nucleotide exchange. Immobilization of the converter enables RuvB to convert the ATP-contained energy into a lever motion, pulling 2 nucleotides of DNA out of the RuvA tetramer per ATP hydrolyzed, thus driving DNA branch migration. The RuvB motors rotate together with the DNA substrate, which together with the progressing nucleotide cycle form the mechanistic basis for DNA recombination by continuous HJ branch migration. Branch migration allows RuvC to scan DNA until it finds its consensus sequence, where it cleaves and resolves cruciform DNA. The sequence is that of Holliday junction branch migration complex subunit RuvB from Rickettsia prowazekii (strain Madrid E).